Here is a 212-residue protein sequence, read N- to C-terminus: Fibrillarin-like rRNA/tRNA 2'-O-methyltransferase (212 aa).

Residues 76 to 77 (TT), 94 to 95 (EL), 119 to 120 (DA), and 139 to 142 (DIAQ) contribute to the S-adenosyl-L-methionine site.

It belongs to the methyltransferase superfamily. Fibrillarin family. As to quaternary structure, interacts with nop5. Component of box C/D small ribonucleoprotein (sRNP) particles that contain rpl7ae, FlpA and nop5, plus a guide RNA.

Functionally, involved in pre-rRNA and tRNA processing. Utilizes the methyl donor S-adenosyl-L-methionine to catalyze the site-specific 2'-hydroxyl methylation of ribose moieties in rRNA and tRNA. Site specificity is provided by a guide RNA that base pairs with the substrate. Methylation occurs at a characteristic distance from the sequence involved in base pairing with the guide RNA. The protein is Fibrillarin-like rRNA/tRNA 2'-O-methyltransferase of Picrophilus torridus (strain ATCC 700027 / DSM 9790 / JCM 10055 / NBRC 100828 / KAW 2/3).